The following is a 175-amino-acid chain: Large ribosomal subunit protein uL10 (175 aa).

The protein belongs to the universal ribosomal protein uL10 family. As to quaternary structure, part of the ribosomal stalk of the 50S ribosomal subunit. The N-terminus interacts with L11 and the large rRNA to form the base of the stalk. The C-terminus forms an elongated spine to which L12 dimers bind in a sequential fashion forming a multimeric L10(L12)X complex.

In terms of biological role, forms part of the ribosomal stalk, playing a central role in the interaction of the ribosome with GTP-bound translation factors. This chain is Large ribosomal subunit protein uL10, found in Mycolicibacterium smegmatis (strain ATCC 700084 / mc(2)155) (Mycobacterium smegmatis).